Here is a 212-residue protein sequence, read N- to C-terminus: Orotate phosphoribosyltransferase (212 aa).

Residues Arg94, Lys98, His100, and 120–128 (EDLISTGGS) contribute to the 5-phospho-alpha-D-ribose 1-diphosphate site. An orotate-binding site is contributed by Ser124.

It belongs to the purine/pyrimidine phosphoribosyltransferase family. PyrE subfamily. Homodimer. Mg(2+) is required as a cofactor.

The enzyme catalyses orotidine 5'-phosphate + diphosphate = orotate + 5-phospho-alpha-D-ribose 1-diphosphate. Its pathway is pyrimidine metabolism; UMP biosynthesis via de novo pathway; UMP from orotate: step 1/2. Its function is as follows. Catalyzes the transfer of a ribosyl phosphate group from 5-phosphoribose 1-diphosphate to orotate, leading to the formation of orotidine monophosphate (OMP). The chain is Orotate phosphoribosyltransferase from Bacillus pumilus (strain SAFR-032).